The sequence spans 193 residues: Adenine phosphoribosyltransferase (193 aa).

This sequence belongs to the purine/pyrimidine phosphoribosyltransferase family. Homodimer.

The protein localises to the cytoplasm. The enzyme catalyses AMP + diphosphate = 5-phospho-alpha-D-ribose 1-diphosphate + adenine. Its pathway is purine metabolism; AMP biosynthesis via salvage pathway; AMP from adenine: step 1/1. Functionally, catalyzes a salvage reaction resulting in the formation of AMP, that is energically less costly than de novo synthesis. In Bifidobacterium longum subsp. infantis (strain ATCC 15697 / DSM 20088 / JCM 1222 / NCTC 11817 / S12), this protein is Adenine phosphoribosyltransferase.